Here is a 672-residue protein sequence, read N- to C-terminus: Putative sodium/calcium exchanger 7 (672 aa).

The N-terminal stretch at 1-23 (MAQPSILFSLTLIFLISIKSCDA) is a signal peptide. 12 helical membrane passes run 88 to 108 (VILIIVGVIYMLVLFIMVSSA), 130 to 150 (VAGVTFMAFGNGAPDVFGSIA), 164 to 184 (LGELFGGGLFVTTMVVSTIIL), 196 to 216 (IRDLLFYLVALSFLAFCFVFY), 221 to 241 (LWMPLTFLGLYLLYVITVIGA), 451 to 471 (LTLLHAFTCPAFLLFSIQFFL), 479 to 499 (PGLWVYGLAVSIVLAILIMVF), 522 to 542 (IAWIYLISSEVVNVVTMLGVV), 551 to 571 (GLTILAWSNSIGDLIADVSVV), 581 to 601 (AAAIGGPLFNLLMGFGLPFTI), 620 to 640 (LILFLAISLLATLIGIPVQKF), and 649 to 669 (VLISIYIAFIVFVILSETGVL).

This sequence belongs to the Ca(2+):cation antiporter (CaCA) (TC 2.A.19) family.

The protein localises to the membrane. This chain is Putative sodium/calcium exchanger 7 (ncx-7), found in Caenorhabditis elegans.